Here is a 192-residue protein sequence, read N- to C-terminus: Crossover junction endodeoxyribonuclease RuvC (192 aa).

Catalysis depends on residues Asp8, Glu67, and Asp139. Positions 8, 67, and 139 each coordinate Mg(2+).

It belongs to the RuvC family. Homodimer which binds Holliday junction (HJ) DNA. The HJ becomes 2-fold symmetrical on binding to RuvC with unstacked arms; it has a different conformation from HJ DNA in complex with RuvA. In the full resolvosome a probable DNA-RuvA(4)-RuvB(12)-RuvC(2) complex forms which resolves the HJ. The cofactor is Mg(2+).

The protein resides in the cytoplasm. The enzyme catalyses Endonucleolytic cleavage at a junction such as a reciprocal single-stranded crossover between two homologous DNA duplexes (Holliday junction).. Functionally, the RuvA-RuvB-RuvC complex processes Holliday junction (HJ) DNA during genetic recombination and DNA repair. Endonuclease that resolves HJ intermediates. Cleaves cruciform DNA by making single-stranded nicks across the HJ at symmetrical positions within the homologous arms, yielding a 5'-phosphate and a 3'-hydroxyl group; requires a central core of homology in the junction. The consensus cleavage sequence is 5'-(A/T)TT(C/G)-3'. Cleavage occurs on the 3'-side of the TT dinucleotide at the point of strand exchange. HJ branch migration catalyzed by RuvA-RuvB allows RuvC to scan DNA until it finds its consensus sequence, where it cleaves and resolves the cruciform DNA. The sequence is that of Crossover junction endodeoxyribonuclease RuvC from Actinobacillus pleuropneumoniae serotype 5b (strain L20).